A 450-amino-acid chain; its full sequence is Phosphoglucosamine mutase (450 aa).

Catalysis depends on S101, which acts as the Phosphoserine intermediate. The Mg(2+) site is built by S101, D241, D243, and D245. Phosphoserine is present on S101.

The protein belongs to the phosphohexose mutase family. Mg(2+) serves as cofactor. Activated by phosphorylation.

The catalysed reaction is alpha-D-glucosamine 1-phosphate = D-glucosamine 6-phosphate. In terms of biological role, catalyzes the conversion of glucosamine-6-phosphate to glucosamine-1-phosphate. This chain is Phosphoglucosamine mutase, found in Listeria innocua serovar 6a (strain ATCC BAA-680 / CLIP 11262).